Here is a 102-residue protein sequence, read N- to C-terminus: MTEILPTWHLYMLRMPSGMLYTGITTDVTRRLAQHQAGKGAKALRGKGQLVLAFHCQAGDRSKALRLEYRVKQLSKTQKERLVSHPPLSLDYLLPDVAVKAG.

Residues 6-81 (PTWHLYMLRM…KQLSKTQKER (76 aa)) form the GIY-YIG domain.

The protein belongs to the UPF0213 family.

This Serratia proteamaculans (strain 568) protein is UPF0213 protein Spro_0507.